The chain runs to 149 residues: Small ribosomal subunit protein eS19 (149 aa).

It belongs to the eukaryotic ribosomal protein eS19 family.

In Mya arenaria (Soft-shell clam), this protein is Small ribosomal subunit protein eS19 (RPS19).